Consider the following 271-residue polypeptide: MSVFSDLPLVIEPSDLAPRLGAPELILVDLTSAARYAEGHIPGARFVDPKRTQWGQPPAPGLLPAKADLEALFGELGHRPEATYVVYDDEGGGWAGRFIWLLDVIGHHHYHYLNGGLPAWIADAQALDREVPAPVGGPLPLTLHDEPSATREYLQSRLGAADLAVWDARNPSEYAGTKVLAAKAGHVPGAINFEWTAGMDPARALRIRADIAEVLEDLGITPDKEVITHCQTHHRSGFTYLVAKALGYPRVKGYAGSWSEWGNHPDTPVEV.

2 consecutive Rhodanese domains span residues 21–129 (GAPE…ALDR) and 159–270 (GAAD…TPVE). C230 functions as the Cysteine persulfide intermediate in the catalytic mechanism.

Its subcellular location is the cytoplasm. The enzyme catalyses thiosulfate + hydrogen cyanide = thiocyanate + sulfite + 2 H(+). Catalyzes the sulfur transfer reaction from thiosulfate to cyanide, thus converting cyanide to the less toxic thiocyanate. Contributes to P.aeruginosa survival under cyanogenic conditions, and thus provides the bacterium with a defense mechanism against endogenous cyanide toxicity. Is the main cytoplasmic rhodanese in P.aeruginosa, accounting for 90% of total rhodanese activity. The sequence is that of Thiosulfate sulfurtransferase from Pseudomonas aeruginosa (strain ATCC 15692 / DSM 22644 / CIP 104116 / JCM 14847 / LMG 12228 / 1C / PRS 101 / PAO1).